The following is an 874-amino-acid chain: Alanine--tRNA ligase (874 aa).

Zn(2+)-binding residues include His-562, His-566, Cys-665, and His-669.

Belongs to the class-II aminoacyl-tRNA synthetase family. The cofactor is Zn(2+).

It is found in the cytoplasm. It catalyses the reaction tRNA(Ala) + L-alanine + ATP = L-alanyl-tRNA(Ala) + AMP + diphosphate. In terms of biological role, catalyzes the attachment of alanine to tRNA(Ala) in a two-step reaction: alanine is first activated by ATP to form Ala-AMP and then transferred to the acceptor end of tRNA(Ala). Also edits incorrectly charged Ser-tRNA(Ala) and Gly-tRNA(Ala) via its editing domain. The sequence is that of Alanine--tRNA ligase from Pseudomonas entomophila (strain L48).